A 245-amino-acid chain; its full sequence is uncharacterized protein (245 aa).

The signal sequence occupies residues 1-27 (MKLKKRVSMFLVALTMCGGLFVTPAKA).

This is an uncharacterized protein from Bacillus subtilis (strain 168).